Here is a 116-residue protein sequence, read N- to C-terminus: Ribosome-binding factor A (116 aa).

It belongs to the RbfA family. Monomer. Binds 30S ribosomal subunits, but not 50S ribosomal subunits or 70S ribosomes.

Its subcellular location is the cytoplasm. Functionally, one of several proteins that assist in the late maturation steps of the functional core of the 30S ribosomal subunit. Associates with free 30S ribosomal subunits (but not with 30S subunits that are part of 70S ribosomes or polysomes). Required for efficient processing of 16S rRNA. May interact with the 5'-terminal helix region of 16S rRNA. The sequence is that of Ribosome-binding factor A from Streptococcus sanguinis (strain SK36).